A 365-amino-acid polypeptide reads, in one-letter code: Spermidine/putrescine import ATP-binding protein PotA (365 aa).

Positions 9-239 constitute an ABC transporter domain; it reads IRLTNVTKSY…PINHFVANFI (231 aa). 41 to 48 lines the ATP pocket; sequence GPSGCGKT.

This sequence belongs to the ABC transporter superfamily. Spermidine/putrescine importer (TC 3.A.1.11.1) family. In terms of assembly, the complex is composed of two ATP-binding proteins (PotA), two transmembrane proteins (PotB and PotC) and a solute-binding protein (PotD).

Its subcellular location is the cell membrane. The catalysed reaction is ATP + H2O + polyamine-[polyamine-binding protein]Side 1 = ADP + phosphate + polyamineSide 2 + [polyamine-binding protein]Side 1.. Part of the ABC transporter complex PotABCD involved in spermidine/putrescine import. Responsible for energy coupling to the transport system. The protein is Spermidine/putrescine import ATP-binding protein PotA of Lactiplantibacillus plantarum (strain ATCC BAA-793 / NCIMB 8826 / WCFS1) (Lactobacillus plantarum).